Reading from the N-terminus, the 145-residue chain is Deoxyuridine 5'-triphosphate nucleotidohydrolase (145 aa).

Belongs to the dUTPase family. Mg(2+) is required as a cofactor.

The catalysed reaction is dUTP + H2O = dUMP + diphosphate + H(+). This enzyme is involved in nucleotide metabolism: it produces dUMP, the immediate precursor of thymidine nucleotides and it decreases the intracellular concentration of dUTP so that uracil cannot be incorporated into DNA. The polypeptide is Deoxyuridine 5'-triphosphate nucleotidohydrolase (DUT) (Fowlpox virus (strain NVSL) (FPV)).